Consider the following 234-residue polypeptide: Sugar fermentation stimulation protein homolog (234 aa).

The protein belongs to the SfsA family.

This Idiomarina loihiensis (strain ATCC BAA-735 / DSM 15497 / L2-TR) protein is Sugar fermentation stimulation protein homolog.